A 401-amino-acid polypeptide reads, in one-letter code: O-methyltransferase mfmE (401 aa).

Residues 243 to 244 (GG) and aspartate 268 each bind S-adenosyl-L-methionine. Catalysis depends on histidine 308, which acts as the Proton acceptor.

The protein belongs to the class I-like SAM-binding methyltransferase superfamily. Cation-independent O-methyltransferase family. COMT subfamily.

It functions in the pathway secondary metabolite biosynthesis; terpenoid biosynthesis. In terms of biological role, O-methyltransferase; part of the gene cluster that mediates the biosynthesis of the phthalide-terpenoid hybrid 11'-O-desmethylfendlerol. Within the pathway, mfmE catalyzes the 7-O-methylation of the phthalide 5,7-dihydroxy-4-(hydroxymethyl)-6-methylphthalide to yield 5-hydroxy-4-(hydroxymethyl)-7-methoxy-6-methylphthalide. The biosynthesis of 11'-O-desmethylfendlerol begins with the NR-PKS mfmB that forms 3,5-dimethylorsellinic acid (DMOA), which is then transformed into the phthalide 5,7-dihydroxy-4-(hydroxymethyl)-6-methylphthalide by the cytochrome P450 monooxygenase mfmA and the hydrolase mfmC. Subsequently, the methyltransferase mfmE catalyzes 7-O-methylation to yield 5-hydroxy-4-(hydroxymethyl)-7-methoxy-6-methylphthalide, which undergoes C-3 hydroxylation by the cytochrome P450 monooxygenase mfmF. The resultant cyclopolic acid (2,5-dihydroxy-4-(hydroxymethyl)-7-methoxy-6-methylphthalide) is then farnesylated by the DMATS-type prenyltransferase mfmD to afford 5-O-farnesylcyclopolic acid. Finally, the Pyr4-family terpene cyclase mfmH cyclizes the farnesyl moiety of 5-O-farnesylcyclopolic acid into a drimane-like structure, thus completing the biosynthesis of 11'-O-desmethylfendlerol. The polypeptide is O-methyltransferase mfmE (Annulohypoxylon moriforme (Filamentous fungus)).